The chain runs to 242 residues: Biosynthetic peptidoglycan transglycosylase (242 aa).

A helical transmembrane segment spans residues 12–31 (LLFWLMLASALLVLALRWLP).

This sequence belongs to the glycosyltransferase 51 family.

The protein localises to the cell inner membrane. The enzyme catalyses [GlcNAc-(1-&gt;4)-Mur2Ac(oyl-L-Ala-gamma-D-Glu-L-Lys-D-Ala-D-Ala)](n)-di-trans,octa-cis-undecaprenyl diphosphate + beta-D-GlcNAc-(1-&gt;4)-Mur2Ac(oyl-L-Ala-gamma-D-Glu-L-Lys-D-Ala-D-Ala)-di-trans,octa-cis-undecaprenyl diphosphate = [GlcNAc-(1-&gt;4)-Mur2Ac(oyl-L-Ala-gamma-D-Glu-L-Lys-D-Ala-D-Ala)](n+1)-di-trans,octa-cis-undecaprenyl diphosphate + di-trans,octa-cis-undecaprenyl diphosphate + H(+). It functions in the pathway cell wall biogenesis; peptidoglycan biosynthesis. In terms of biological role, peptidoglycan polymerase that catalyzes glycan chain elongation from lipid-linked precursors. In Ectopseudomonas mendocina (strain ymp) (Pseudomonas mendocina), this protein is Biosynthetic peptidoglycan transglycosylase.